Consider the following 291-residue polypeptide: Phosphatidylglycerol--prolipoprotein diacylglyceryl transferase (291 aa).

A run of 4 helical transmembrane segments spans residues 24–44, 64–84, 99–119, and 125–145; these read WYALAYIGGIMLGWLYARALL, FILWVTIGIILGGRTGYVLFY, IWKGGMSFHGGFMGCVVAVIL, and GLPILSLGDVATAVGPIGLFL. Arg147 provides a ligand contact to a 1,2-diacyl-sn-glycero-3-phospho-(1'-sn-glycerol). The next 3 membrane-spanning stretches (helical) occupy residues 187–207, 211–231, and 247–267; these read ATLEGLVLFTILALMIRAGAL, GLVLGSFITLYAMARIAGEFF, and MGMLLSAPMIIAGLAIICVAW.

Belongs to the Lgt family.

Its subcellular location is the cell inner membrane. The enzyme catalyses L-cysteinyl-[prolipoprotein] + a 1,2-diacyl-sn-glycero-3-phospho-(1'-sn-glycerol) = an S-1,2-diacyl-sn-glyceryl-L-cysteinyl-[prolipoprotein] + sn-glycerol 1-phosphate + H(+). It participates in protein modification; lipoprotein biosynthesis (diacylglyceryl transfer). Catalyzes the transfer of the diacylglyceryl group from phosphatidylglycerol to the sulfhydryl group of the N-terminal cysteine of a prolipoprotein, the first step in the formation of mature lipoproteins. The chain is Phosphatidylglycerol--prolipoprotein diacylglyceryl transferase from Nitrobacter hamburgensis (strain DSM 10229 / NCIMB 13809 / X14).